We begin with the raw amino-acid sequence, 267 residues long: Small ribosomal subunit protein uS2 (267 aa).

The interval 226-267 is disordered; it reads AAAPNSASVREEEFSAESADEGKGRRAPAKKGEKKADAPAAE. Over residues 245–267 the composition is skewed to basic and acidic residues; that stretch reads DEGKGRRAPAKKGEKKADAPAAE.

The protein belongs to the universal ribosomal protein uS2 family.

This Xanthomonas oryzae pv. oryzae (strain MAFF 311018) protein is Small ribosomal subunit protein uS2.